A 108-amino-acid chain; its full sequence is uncharacterized protein (108 aa).

G2 carries the N-myristoyl glycine; by host lipid modification.

This is an uncharacterized protein from Acanthamoeba polyphaga (Amoeba).